Consider the following 641-residue polypeptide: Threonine--tRNA ligase (641 aa).

Residues 1 to 61 (MPIITLPDGT…TQNSHIQIIT (61 aa)) enclose the TGS domain. The interval 242 to 533 (DHRKLGKKYS…LIENYSGNFP (292 aa)) is catalytic. Cysteine 333, histidine 384, and histidine 510 together coordinate Zn(2+).

The protein belongs to the class-II aminoacyl-tRNA synthetase family. In terms of assembly, homodimer. The cofactor is Zn(2+).

It localises to the cytoplasm. The enzyme catalyses tRNA(Thr) + L-threonine + ATP = L-threonyl-tRNA(Thr) + AMP + diphosphate + H(+). Its function is as follows. Catalyzes the attachment of threonine to tRNA(Thr) in a two-step reaction: L-threonine is first activated by ATP to form Thr-AMP and then transferred to the acceptor end of tRNA(Thr). Also edits incorrectly charged L-seryl-tRNA(Thr). This Prochlorococcus marinus (strain NATL2A) protein is Threonine--tRNA ligase.